The primary structure comprises 614 residues: Pheromone-processing carboxypeptidase KEX1 (614 aa).

A signal peptide spans 1–17 (MKLSWSLFCGLASLALS). The Lumenal portion of the chain corresponds to 18–518 (QFDEAPPSQS…SDAMWKAYYQ (501 aa)). Asparagine 42 is a glycosylation site (N-linked (GlcNAc...) asparagine). Catalysis depends on residues serine 177 and aspartate 379. N-linked (GlcNAc...) asparagine glycans are attached at residues asparagine 426 and asparagine 434. Residue histidine 437 is part of the active site. Positions 465–503 (SGNKPGRGSENPSDLDDQKSGDQKSDDDSSSDDDDDAEH) are disordered. The span at 480-491 (DDQKSGDQKSDD) shows a compositional bias: basic and acidic residues. Over residues 492-501 (DSSSDDDDDA) the composition is skewed to acidic residues. A helical transmembrane segment spans residues 519–539 (AGFTALIVVLIILGLAGFLFW). Over 540-614 (RKNRGHIYQE…EELVIRRPEV (75 aa)) the chain is Cytoplasmic.

It belongs to the peptidase S10 family.

It is found in the golgi apparatus. It localises to the trans-Golgi network membrane. The catalysed reaction is Preferential release of a C-terminal arginine or lysine residue.. Protease with a carboxypeptidase B-like function involved in the C-terminal processing of the lysine and arginine residues from protein precursors. Promotes cell fusion and is involved in the programmed cell death. The chain is Pheromone-processing carboxypeptidase KEX1 (KEX1) from Yarrowia lipolytica (strain CLIB 122 / E 150) (Yeast).